The sequence spans 143 residues: Transcription antitermination protein NusB (143 aa).

This sequence belongs to the NusB family.

Involved in transcription antitermination. Required for transcription of ribosomal RNA (rRNA) genes. Binds specifically to the boxA antiterminator sequence of the ribosomal RNA (rrn) operons. The protein is Transcription antitermination protein NusB of Desulforapulum autotrophicum (strain ATCC 43914 / DSM 3382 / VKM B-1955 / HRM2) (Desulfobacterium autotrophicum).